Consider the following 389-residue polypeptide: Nicotinate phosphoribosyltransferase (389 aa).

The residue at position 216 (His216) is a Phosphohistidine; by autocatalysis.

This sequence belongs to the NAPRTase family. In terms of processing, transiently phosphorylated on a His residue during the reaction cycle. Phosphorylation strongly increases the affinity for substrates and increases the rate of nicotinate D-ribonucleotide production. Dephosphorylation regenerates the low-affinity form of the enzyme, leading to product release.

It carries out the reaction nicotinate + 5-phospho-alpha-D-ribose 1-diphosphate + ATP + H2O = nicotinate beta-D-ribonucleotide + ADP + phosphate + diphosphate. It participates in cofactor biosynthesis; NAD(+) biosynthesis; nicotinate D-ribonucleotide from nicotinate: step 1/1. In terms of biological role, catalyzes the synthesis of beta-nicotinate D-ribonucleotide from nicotinate and 5-phospho-D-ribose 1-phosphate at the expense of ATP. The chain is Nicotinate phosphoribosyltransferase from Ralstonia pickettii (strain 12J).